Here is a 408-residue protein sequence, read N- to C-terminus: Acetate kinase (408 aa).

A Mg(2+)-binding site is contributed by asparagine 7. ATP is bound at residue lysine 14. Position 91 (arginine 91) interacts with substrate. The active-site Proton donor/acceptor is the aspartate 148. ATP contacts are provided by residues 208–212, 283–285, and 331–335; these read HLGNG, DFR, and GIGEN. Glutamate 384 contacts Mg(2+).

It belongs to the acetokinase family. Homodimer. Mg(2+) serves as cofactor. The cofactor is Mn(2+).

It localises to the cytoplasm. The enzyme catalyses acetate + ATP = acetyl phosphate + ADP. Its pathway is metabolic intermediate biosynthesis; acetyl-CoA biosynthesis; acetyl-CoA from acetate: step 1/2. Functionally, catalyzes the formation of acetyl phosphate from acetate and ATP. Can also catalyze the reverse reaction. The chain is Acetate kinase from Methanosarcina mazei (strain ATCC BAA-159 / DSM 3647 / Goe1 / Go1 / JCM 11833 / OCM 88) (Methanosarcina frisia).